A 1138-amino-acid polypeptide reads, in one-letter code: Pesticidal crystal protein Cry7Ab (1138 aa).

The protein belongs to the delta endotoxin family.

In terms of biological role, promotes colloidosmotic lysis by binding to the midgut epithelial cells of Coleoptera. This is Pesticidal crystal protein Cry7Ab (cry7Ab) from Bacillus thuringiensis subsp. dakota.